Reading from the N-terminus, the 225-residue chain is PKHD-type hydroxylase YbiX (225 aa).

Positions 78–177 (TLSTPLFNRY…RVASFMWIQS (100 aa)) constitute a Fe2OG dioxygenase domain. Residues His-96, Asp-98, and His-158 each coordinate Fe cation. Residue Arg-168 coordinates 2-oxoglutarate.

Fe(2+) is required as a cofactor. Requires L-ascorbate as cofactor.

This Escherichia coli O6:K15:H31 (strain 536 / UPEC) protein is PKHD-type hydroxylase YbiX.